The primary structure comprises 116 residues: Putative anti-sigma factor antagonist BtrV (116 aa).

An STAS domain is found at 1–110 (MKLTMDKIDG…NSREAAAAAF (110 aa)). Ser55 carries the phosphoserine; by BtrW modification.

The protein belongs to the anti-sigma-factor antagonist family. As to quaternary structure, interacts with BtrW. Phosphorylated by BtrW. Dephosphorylated by BtrU.

Its function is as follows. Possible positive regulator of sigma-B activity. Non-phosphorylated BtrV binds to BtrW, preventing its association with an unknown partner(s) that might be sigma-B. When phosphorylated, releases BtrW, which is then free to complex with and inactivate its partner. Involved in type III secretion system (T3SS). This chain is Putative anti-sigma factor antagonist BtrV (btrV), found in Bordetella bronchiseptica (strain ATCC BAA-588 / NCTC 13252 / RB50) (Alcaligenes bronchisepticus).